Consider the following 118-residue polypeptide: Heavy metal-associated isoprenylated plant protein 47 (118 aa).

Residues 1 to 67 (MRIKLSVNSE…KACHVTLETL (67 aa)) form the HMA domain. Cysteine methyl ester is present on C115. The S-farnesyl cysteine moiety is linked to residue C115. A propeptide spans 116–118 (LVM) (removed in mature form).

It belongs to the HIPP family.

Heavy-metal-binding protein. In Arabidopsis thaliana (Mouse-ear cress), this protein is Heavy metal-associated isoprenylated plant protein 47.